The sequence spans 865 residues: General transcription factor 3C polypeptide 5 (865 aa).

Disordered regions lie at residues Met-1–Ser-21, Arg-111–Phe-163, Asn-191–Ile-215, Gln-391–Gly-522, and Asp-669–Glu-865. Low complexity-rich tracts occupy residues Lys-7–Ser-21, Gln-115–Gln-126, Gln-140–Gln-158, Asp-199–Ser-210, and Ser-401–Lys-411. Composition is skewed to basic and acidic residues over residues Asp-412–Glu-439 and Asn-448–Asp-489. 2 stretches are compositionally biased toward low complexity: residues Glu-508 to Glu-521 and Arg-677 to Thr-696. 3 stretches are compositionally biased toward basic and acidic residues: residues Gln-697–Pro-713, Gln-757–Lys-766, and Met-773–Glu-786. Composition is skewed to acidic residues over residues Asp-800 to Gly-820 and Glu-839 to Glu-865.

It belongs to the TFIIIC subunit 5 family. As to quaternary structure, part of the TFIIIC complex.

It is found in the nucleus. In terms of biological role, involved in RNA polymerase III-mediated transcription. Integral, tightly associated component of the DNA-binding TFIIIC2 subcomplex that directly binds tRNA and virus-associated RNA promoters. The polypeptide is General transcription factor 3C polypeptide 5 (gtf3c5) (Dictyostelium discoideum (Social amoeba)).